The sequence spans 419 residues: UDP-N-acetylglucosamine 1-carboxyvinyltransferase 2 (419 aa).

Position 22 to 23 (22 to 23 (KN)) interacts with phosphoenolpyruvate. Arginine 92 lines the UDP-N-acetyl-alpha-D-glucosamine pocket. Residue cysteine 116 is the Proton donor of the active site. The residue at position 116 (cysteine 116) is a 2-(S-cysteinyl)pyruvic acid O-phosphothioketal. UDP-N-acetyl-alpha-D-glucosamine-binding positions include 121–125 (RPIDL), aspartate 306, and isoleucine 328.

It belongs to the EPSP synthase family. MurA subfamily.

The protein resides in the cytoplasm. The enzyme catalyses phosphoenolpyruvate + UDP-N-acetyl-alpha-D-glucosamine = UDP-N-acetyl-3-O-(1-carboxyvinyl)-alpha-D-glucosamine + phosphate. It participates in cell wall biogenesis; peptidoglycan biosynthesis. Its function is as follows. Cell wall formation. Adds enolpyruvyl to UDP-N-acetylglucosamine. The sequence is that of UDP-N-acetylglucosamine 1-carboxyvinyltransferase 2 from Streptococcus pyogenes serotype M18 (strain MGAS8232).